Reading from the N-terminus, the 148-residue chain is L-alanine exporter AlaE (148 aa).

4 helical membrane passes run 18–38 (FALVVYCFVIGMIIEIVISGM), 49–69 (VSIPVNILIAWPYGLYRDAFI), 88–108 (LLAYVSFQSPVYALILWSVGA), and 115–135 (TAVASNALVSMAMGVAYGYFL).

It belongs to the AlaE exporter family.

It localises to the cell inner membrane. Functionally, exports L-alanine. The polypeptide is L-alanine exporter AlaE (Yersinia enterocolitica subsp. palearctica serotype O:3 (strain DSM 13030 / CIP 106945 / Y11)).